A 208-amino-acid polypeptide reads, in one-letter code: Small ribosomal subunit protein uS4 (208 aa).

The S4 RNA-binding domain occupies 98–161 (RRLDNVVYRL…RKIPVLAEAQ (64 aa)).

It belongs to the universal ribosomal protein uS4 family. As to quaternary structure, part of the 30S ribosomal subunit. Contacts protein S5. The interaction surface between S4 and S5 is involved in control of translational fidelity.

Functionally, one of the primary rRNA binding proteins, it binds directly to 16S rRNA where it nucleates assembly of the body of the 30S subunit. Its function is as follows. With S5 and S12 plays an important role in translational accuracy. In Desulfovibrio desulfuricans (strain ATCC 27774 / DSM 6949 / MB), this protein is Small ribosomal subunit protein uS4.